A 503-amino-acid polypeptide reads, in one-letter code: DEAD-box ATP-dependent RNA helicase CshA (503 aa).

A Q motif motif is present at residues 2–30 (QNFKELGISDKTVETLEAMGFKEPTPIQK). Positions 33–203 (IPYTLEGKDI…QQFMKSPQIV (171 aa)) constitute a Helicase ATP-binding domain. Residue 46-53 (AQTGTGKT) participates in ATP binding. Residues 150-153 (DEAD) carry the DEAD box motif. A Helicase C-terminal domain is found at 214 to 375 (QIDEYYTIVK…LRPPHRKEVL (162 aa)). The tract at residues 436–503 (EKPLARKNRQ…KGRTFADLQK (68 aa)) is disordered. Residues 466-480 (KRSKGNFNKKKGKKT) are compositionally biased toward basic residues. Positions 481-490 (DRRERQDKGR) are enriched in basic and acidic residues.

It belongs to the DEAD box helicase family. CshA subfamily. In terms of assembly, oligomerizes, may be a member of the RNA degradosome.

The protein resides in the cytoplasm. It catalyses the reaction ATP + H2O = ADP + phosphate + H(+). In terms of biological role, DEAD-box RNA helicase possibly involved in RNA degradation. Unwinds dsRNA in both 5'- and 3'-directions, has RNA-dependent ATPase activity. This chain is DEAD-box ATP-dependent RNA helicase CshA, found in Staphylococcus haemolyticus (strain JCSC1435).